The primary structure comprises 366 residues: NADH-quinone oxidoreductase subunit D (366 aa).

It belongs to the complex I 49 kDa subunit family. As to quaternary structure, NDH-1 is composed of 14 different subunits. Subunits NuoB, C, D, E, F, and G constitute the peripheral sector of the complex.

The protein localises to the cell membrane. It catalyses the reaction a quinone + NADH + 5 H(+)(in) = a quinol + NAD(+) + 4 H(+)(out). NDH-1 shuttles electrons from NADH, via FMN and iron-sulfur (Fe-S) centers, to quinones in the respiratory chain. The immediate electron acceptor for the enzyme in this species is believed to be a menaquinone. Couples the redox reaction to proton translocation (for every two electrons transferred, four hydrogen ions are translocated across the cytoplasmic membrane), and thus conserves the redox energy in a proton gradient. This is NADH-quinone oxidoreductase subunit D from Bacillus cereus (strain ZK / E33L).